The chain runs to 237 residues: MSDVTTAEFNEEGKYLRKVRSFVLREGRLTKGQAQAMEQQWPKIGLDYTPEPIDLVEVFGREADTVLEIGFGMGASLVAMAKAAPELNFIGIEVHKPGVGACLAEAAEAGVTNLRVYHHDAIEVLENSIAEGSLACVQLFFPDPWHKTRHHKRRIVQAPFAELIRSKLKVGGVFHLATDWENYSEHMLEVMTAAPGYKNQSATGDVVERPAHRPLTKFEARGHRLGHGVWDLMFERV.

S-adenosyl-L-methionine is bound by residues Glu68, Glu93, Asp120, and Asp143. Asp143 is a catalytic residue. Substrate contacts are provided by residues Lys147, Asp179, and 216–219; that span reads TKFE.

This sequence belongs to the class I-like SAM-binding methyltransferase superfamily. TrmB family.

It carries out the reaction guanosine(46) in tRNA + S-adenosyl-L-methionine = N(7)-methylguanosine(46) in tRNA + S-adenosyl-L-homocysteine. It participates in tRNA modification; N(7)-methylguanine-tRNA biosynthesis. Its function is as follows. Catalyzes the formation of N(7)-methylguanine at position 46 (m7G46) in tRNA. In Shewanella pealeana (strain ATCC 700345 / ANG-SQ1), this protein is tRNA (guanine-N(7)-)-methyltransferase.